A 1482-amino-acid chain; its full sequence is Chromosome partition protein MukB (1482 aa).

34–41 contacts ATP; that stretch reads GGNGAGKS. Residues 333–665 adopt a coiled-coil conformation; it reads ASDHLNLVQT…LEKQIERLSQ (333 aa). Residues 666–783 form a flexible hinge region; the sequence is PSGAEDSRMI…ELPLFGRAAR (118 aa). Coiled coils occupy residues 784-1116 and 1209-1260; these read ENRL…AKAG and VDAI…MLNQ.

Belongs to the SMC family. MukB subfamily. In terms of assembly, homodimerization via its hinge domain. Binds to DNA via its C-terminal region. Interacts, and probably forms a ternary complex, with MukE and MukF via its C-terminal region. The complex formation is stimulated by calcium or magnesium. Interacts with tubulin-related protein FtsZ.

Its subcellular location is the cytoplasm. The protein resides in the nucleoid. Its function is as follows. Plays a central role in chromosome condensation, segregation and cell cycle progression. Functions as a homodimer, which is essential for chromosome partition. Involved in negative DNA supercoiling in vivo, and by this means organize and compact chromosomes. May achieve or facilitate chromosome segregation by condensation DNA from both sides of a centrally located replisome during cell division. This chain is Chromosome partition protein MukB, found in Photorhabdus laumondii subsp. laumondii (strain DSM 15139 / CIP 105565 / TT01) (Photorhabdus luminescens subsp. laumondii).